We begin with the raw amino-acid sequence, 352 residues long: MVRTPCCKAELGLKKGAWTPEEDQKLLSYLNRHGEGGWRTLPEKAGLKRCGKSCRLRWANYLRPDIKRGEFTEDEERSIISLHALHGNKWSAIARGLPGRTDNEIKNYWNTHIKKRLIKKGIDPVTHKGITSGTDKSENLPEKQNVNLTTSDHDLDNDKAKKNNKNFGLSSASFLNKVANRFGKRINQSVLSEIIGSGGPLASTSHTTNTTTTSVSVDSESVKSTSSSFAPTSNLLCHGTVATTPVSSNFDVDGNVNLTCSSSTFSDSSVNNPLMYCDNFVGNNNVDDEDTIGFSTFLNDEDFMMLEESCVENTAFMKELTRFLHEDENDVVDVTPVYERQDLFDEIDNYFG.

HTH myb-type domains lie at 10-62 (ELGL…ANYL) and 63-117 (RPDI…KKRL). 2 DNA-binding regions (H-T-H motif) span residues 38–62 (WRTLPEKAGLKRCGKSCRLRWANYL) and 90–113 (WSAIARGLPGRTDNEIKNYWNTHI). Disordered stretches follow at residues 128–157 (KGITSGTDKSENLPEKQNVNLTTSDHDLDN) and 198–219 (GGPLASTSHTTNTTTTSVSVDS). Positions 203-219 (STSHTTNTTTTSVSVDS) are enriched in low complexity.

In terms of assembly, can form complexes with MYC2, MYC3 or MYC4. As to expression, expressed in vegetative parts of the plant, mainly in mature rosette leaves and in trichomes. Detected in roots, but not in mature flowers or siliques.

The protein resides in the nucleus. Functionally, transcription factor positively regulating indolic glucosinolate biosynthetic pathway genes. This Arabidopsis thaliana (Mouse-ear cress) protein is Transcription factor MYB51 (MYB51).